The following is a 427-amino-acid chain: Type II methyltransferase M1.BsuMI (427 aa).

The region spanning 84 to 427 (INIADLFSGC…SYLLALHQLR (344 aa)) is the SAM-dependent MTase C5-type domain. Residue Cys-176 is part of the active site.

It belongs to the class I-like SAM-binding methyltransferase superfamily. C5-methyltransferase family. In terms of assembly, monomer. May form a complex with YdiP, also seems to be active alone.

It carries out the reaction a 2'-deoxycytidine in DNA + S-adenosyl-L-methionine = a 5-methyl-2'-deoxycytidine in DNA + S-adenosyl-L-homocysteine + H(+). Its activity is regulated as follows. Somewhat inhibited by MgCl(2) and spermidine, strongly inhibited by MnCl(2). A methylase, recognizes the double-stranded sequence 5'-YTCGAR-3', methylates C-3 on both strands, and protects the DNA from cleavage by the BsuMI endonuclease. This is Type II methyltransferase M1.BsuMI (ydiO) from Bacillus subtilis (strain 168).